The primary structure comprises 142 residues: Large ribosomal subunit protein uL13 (142 aa).

This sequence belongs to the universal ribosomal protein uL13 family. Part of the 50S ribosomal subunit.

This protein is one of the early assembly proteins of the 50S ribosomal subunit, although it is not seen to bind rRNA by itself. It is important during the early stages of 50S assembly. This Pyrococcus horikoshii (strain ATCC 700860 / DSM 12428 / JCM 9974 / NBRC 100139 / OT-3) protein is Large ribosomal subunit protein uL13.